The chain runs to 224 residues: Polysialic acid transport ATP-binding protein KpsT (224 aa).

Positions 2-223 constitute an ABC transporter domain; the sequence is IKIENLTKSY…EYKMYQDLDI (222 aa). 38–45 contacts ATP; the sequence is GRNGAGKS.

It belongs to the ABC transporter superfamily.

The protein resides in the cell inner membrane. Its function is as follows. Putative ATP-binding protein, and an energy coupling component for the transport of polysialic acid across the cytoplasmic membrane. This Escherichia coli protein is Polysialic acid transport ATP-binding protein KpsT (kpsT).